A 497-amino-acid chain; its full sequence is NADH-quinone oxidoreductase subunit N (497 aa).

14 helical membrane-spanning segments follow: residues 14-34 (LMAM…MLSI), 45-65 (SLTV…WGLF), 86-106 (IFYS…AYPW), 116-136 (EFYL…SAQH), 137-157 (LAAV…LLGY), 171-191 (YFVL…MLYA), 215-235 (ILAG…LVPF), 253-273 (FLGT…FLYV), 281-301 (LNTA…LMAL), 309-329 (LLGY…IALH), 338-358 (VAVY…VVSL), 385-405 (AAVM…LGFI), 420-439 (WVLT…YYLR), and 461-481 (AFTA…VFGI).

Belongs to the complex I subunit 2 family. NDH-1 is composed of 13 different subunits. Subunits NuoA, H, J, K, L, M, N constitute the membrane sector of the complex.

It is found in the cell membrane. The enzyme catalyses a quinone + NADH + 5 H(+)(in) = a quinol + NAD(+) + 4 H(+)(out). NDH-1 shuttles electrons from NADH, via FMN and iron-sulfur (Fe-S) centers, to quinones in the respiratory chain. The immediate electron acceptor for the enzyme in this species is believed to be ubiquinone. Couples the redox reaction to proton translocation (for every two electrons transferred, four hydrogen ions are translocated across the cytoplasmic membrane), and thus conserves the redox energy in a proton gradient. The chain is NADH-quinone oxidoreductase subunit N from Hamiltonella defensa subsp. Acyrthosiphon pisum (strain 5AT).